The chain runs to 243 residues: MPTEIAPRDRLIVALDLPGVAEAEAMITRLGDAVTFYKIGMELTYAGGLGLAERLAADGKQVFMDLKLHDIPNTVERATRQIARLGARFLTVHGFSQSMTAALAGAAGSPLELLAVTVMTSYDDADLAAAGYAMGVKELVARRAVQAKQIGIHGLILSPEETQLVRPLVGPDMQLVTPGIRPAGSDVGDQKRIMTPALAIAGGADRLVVGRPVTGAADPAAAAESIVADIASALALVGKTNRT.

Substrate contacts are provided by residues aspartate 16, lysine 38, 65–74, threonine 120, arginine 181, glutamine 190, glycine 210, and arginine 211; that span reads DLKLHDIPNT. Lysine 67 functions as the Proton donor in the catalytic mechanism.

The protein belongs to the OMP decarboxylase family. Type 1 subfamily. Homodimer.

The catalysed reaction is orotidine 5'-phosphate + H(+) = UMP + CO2. It participates in pyrimidine metabolism; UMP biosynthesis via de novo pathway; UMP from orotate: step 2/2. Catalyzes the decarboxylation of orotidine 5'-monophosphate (OMP) to uridine 5'-monophosphate (UMP). This Bradyrhizobium sp. (strain BTAi1 / ATCC BAA-1182) protein is Orotidine 5'-phosphate decarboxylase.